We begin with the raw amino-acid sequence, 586 residues long: Mitogen-activated protein kinase 15 (586 aa).

One can recognise a Protein kinase domain in the interval 14-305; sequence YDIKKRLGKG…AEEALEHPYV (292 aa). ATP is bound by residues 20-28 and Lys43; that span reads LGKGAYGIV. The Proton acceptor role is filled by Asp138. Disordered stretches follow at residues 354–506 and 520–539; these read QKRE…DAPP and NQRT…RFGR. Residues 382 to 393 are compositionally biased toward pro residues; sequence PAPPAGTNPAPQ. Residues 400 to 414 show a composition bias toward low complexity; the sequence is PQRAAIAAPNQPPAQ. Polar residues predominate over residues 415–439; it reads KDSTQQSPKIKAPSSNPITHSTTHG. Low complexity predominate over residues 452-463; it reads AGQQGAAGTTAQ. Positions 464 to 473 are enriched in basic and acidic residues; that stretch reads EVRKEVESRS. Residues 484–498 show a composition bias toward polar residues; it reads FSHSQQARAAATNSA.

Interacts with dvl2.

It is found in the cytoplasm. The protein resides in the cytoskeleton. Its subcellular location is the cilium basal body. It localises to the cell projection. The protein localises to the cilium. It is found in the cell junction. It catalyses the reaction L-seryl-[protein] + ATP = O-phospho-L-seryl-[protein] + ADP + H(+). It carries out the reaction L-threonyl-[protein] + ATP = O-phospho-L-threonyl-[protein] + ADP + H(+). In terms of biological role, atypical MAPK protein that regulates ciliogenesis by phosphorylating rcsd1 through its binding with dvl2. The sequence is that of Mitogen-activated protein kinase 15 from Xenopus laevis (African clawed frog).